The primary structure comprises 3119 residues: Huntingtin (3119 aa).

Residues 1–65 are disordered; that stretch reads MATLEKLMKA…LPGPAEEPLH (65 aa). Position 9 is an N6-acetyllysine (Lys9). Positions 24 to 60 are enriched in pro residues; sequence QPPPQAPPPPPPPPPQPPQPPPQGQPPPPPPPLPGPA. 2 positions are modified to N6-acetyllysine: Lys155 and Lys213. HEAT repeat units follow at residues 183–220 and 225–262; these read PYLV…SFGN and NEIK…HSRR. Lys322 carries the N6-acetyllysine modification. Phosphoserine is present on residues Ser396, Ser398, and Ser411. At Lys421 the chain carries N6-acetyllysine. Residues 470 to 481 are interaction with ZDHHC17; it reads GHDIITEQPRSQ. Positions 495–558 are disordered; that stretch reads DLTSAATDGD…DSAVTPSDSS (64 aa). Polar residues predominate over residues 529–558; it reads DGTQASSPISDSSQTTTEGPDSAVTPSDSS. Residue Gly530 is the site of N-myristoyl glycine attachment. Ser620 and Ser623 each carry phosphoserine. HEAT repeat units lie at residues 782–819 and 882–920; these read FSLV…SLCS and KLQE…KLFY. The segment at 1146–1204 is disordered; it reads KAALPSLTNPPSLSPIRRKGKEKEPGEQASTPMSPKKVGEASAASRQSDTSGPVTASKS. Residues 1149 to 1160 show a composition bias toward low complexity; sequence LPSLTNPPSLSP. Residues Ser1159 and Ser1179 each carry the phosphoserine; by CDK5 modification. Positions 1189–1204 are enriched in polar residues; sequence ASRQSDTSGPVTASKS. Residues 1404–1441 form an HEAT 5 repeat; the sequence is LFEPLVIKALKQYTTTTSVQLQKQVLDLLAQLVQLRVN. Ser1853 carries the phosphoserine modification. Residues 2372–2381 carry the Nuclear export signal motif; that stretch reads IVISLARLPL. The interval 2610-2637 is disordered; it reads EEEWDEEEEEESDVPAPTSPPVSPVNSR. The span at 2611 to 2622 shows a compositional bias: acidic residues; the sequence is EEWDEEEEEESD.

It belongs to the huntingtin family. Interacts with PFN1. Interacts through its N-terminus with PRPF40A. Interacts with PQBP1. Interacts with SETD2. Interacts with SH3GLB1. Interacts with SYVN. Interacts with TPR; the interaction is inhibited by forms of Huntingtin with expanded polyglutamine stretch. Interacts with ZDHHC13 (via ANK repeats). Interacts with ZDHHC17 (via ANK repeats). Interacts with F8A1/F8A2/F8A3. Found in a complex with F8A1/F8A2/F8A3, HTT and RAB5A; mediates the recruitment of HTT by RAB5A. Post-translationally, phosphorylation at Ser-1159 and Ser-1179 by CDK5 in response to DNA damage in nuclei of neurons protects neurons against polyglutamine expansion as well as DNA damage mediated toxicity. Cleaved by caspases downstream of the polyglutamine stretch. In terms of processing, myristoylated at Gly-530, following proteolytic cleavage at Asp-529. The highest level is seen throughout the brain, but it is also found in the stomach, heart, testis, adipose tissue, muscle, spleen, liver, and kidney.

The protein localises to the cytoplasm. It is found in the nucleus. The protein resides in the cytoplasmic vesicle. Its subcellular location is the autophagosome. Its function is as follows. May play a role in microtubule-mediated transport or vesicle function. Functionally, promotes the formation of autophagic vesicles. The polypeptide is Huntingtin (Htt) (Mus musculus (Mouse)).